The chain runs to 485 residues: MYVNRRFYDKYVSTRDVELLHEYSLRVLKEVGVSFDCEEALEIFKKHGATVEGSIVKIDEDLLNQALETAPKTFTITTSAGETKIGERYKPKTVGCYGPPKFLFEDDEYRVAKKDDMVKFLKLMDTSDVTDFVNNSAYDTPDLDKTKEDFYLPQVAMCLKYSQKPTYGNVANSMNVRGKSLKQEAKDIAKLYKEFYDIWDRPVLLTNTCALSPLGYSYEVLDNIMGLVEEGQPVTIITCSMTNLTAPAALLGSVIQNNATILAGIVLTQLINPGNPVIYGTVSTATDMRNVACSIGAPEAQLIQMASLALGRYYQLPVRTGIAGTDSLKPDYQAGVESFMILMTTYLGKSDFVLNHAGILQAYALGSYEKFVLDEEVNRILLRLNRGIDISDVKAEKVFDAIKKAGPLGNYLSGRTPKEYRQEHWLTKLFNRQAGNPQPIFDEIGDLRERASKEVEERVAGYTLPDLTKTQKDILNRYLPEDEKF.

It belongs to the trimethylamine methyltransferase family. As to quaternary structure, the proline betaine:THF methyl transfer system is composed of two methyltransferases, MtpB and MtqA, and the corrinoid protein MtqC.

It catalyses the reaction Co(I)-[quaternary-amine-specific corrinoid protein] + L-proline betaine + H(+) = methyl-Co(III)-[quaternary-amine-specific corrinoid protein] + N-methyl-L-proline. Involved in the degradation of the quaternary amine L-proline betaine. Component of a corrinoid-dependent methyltransferase system that transfers a methyl group from L-proline betaine to tetrahydrofolate (THF), forming methyl-THF, a key intermediate in the Wood-Ljungdahl acetogenesis pathway. MtpB catalyzes the methylation of the corrinoid protein MtqC, using L-proline betaine as the methyl donor. Shows weak activity with some other quaternary amines, including carnitine, phosphocholine, glycine betaine or betonicine, but cannot methylate free cob(I)alamin. The chain is Proline betaine:corrinoid methyltransferase from Eubacterium limosum.